Here is a 443-residue protein sequence, read N- to C-terminus: 3-phosphoshikimate 1-carboxyvinyltransferase (443 aa).

3-phosphoshikimate contacts are provided by Lys-25, Ser-26, and Arg-30. Phosphoenolpyruvate is bound at residue Lys-25. Phosphoenolpyruvate is bound by residues Gly-117 and Arg-145. Residues Ser-188, Ser-189, Gln-190, Ser-217, Glu-331, and His-358 each contribute to the 3-phosphoshikimate site. Position 190 (Gln-190) interacts with phosphoenolpyruvate. The active-site Proton acceptor is the Glu-331. Phosphoenolpyruvate contacts are provided by Arg-362, Arg-404, and Lys-428.

The protein belongs to the EPSP synthase family. As to quaternary structure, monomer.

Its subcellular location is the cytoplasm. It carries out the reaction 3-phosphoshikimate + phosphoenolpyruvate = 5-O-(1-carboxyvinyl)-3-phosphoshikimate + phosphate. It participates in metabolic intermediate biosynthesis; chorismate biosynthesis; chorismate from D-erythrose 4-phosphate and phosphoenolpyruvate: step 6/7. Its function is as follows. Catalyzes the transfer of the enolpyruvyl moiety of phosphoenolpyruvate (PEP) to the 5-hydroxyl of shikimate-3-phosphate (S3P) to produce enolpyruvyl shikimate-3-phosphate and inorganic phosphate. This Tropheryma whipplei (strain TW08/27) (Whipple's bacillus) protein is 3-phosphoshikimate 1-carboxyvinyltransferase.